We begin with the raw amino-acid sequence, 675 residues long: Potassium-transporting ATPase ATP-binding subunit (675 aa).

4 consecutive transmembrane segments (helical) span residues I34 to I54, L65 to F85, I216 to L236, and L245 to G265. D304 (4-aspartylphosphate intermediate) is an active-site residue. Residues D341, E345, F372–S379, and K390 contribute to the ATP site. Mg(2+) is bound by residues D513 and D517. The next 3 helical transmembrane spans lie at A569–M591, A611–M631, and I644–I664.

The protein belongs to the cation transport ATPase (P-type) (TC 3.A.3) family. Type IA subfamily. In terms of assembly, the system is composed of three essential subunits: KdpA, KdpB and KdpC.

Its subcellular location is the cell membrane. It carries out the reaction K(+)(out) + ATP + H2O = K(+)(in) + ADP + phosphate + H(+). Part of the high-affinity ATP-driven potassium transport (or Kdp) system, which catalyzes the hydrolysis of ATP coupled with the electrogenic transport of potassium into the cytoplasm. This subunit is responsible for energy coupling to the transport system and for the release of the potassium ions to the cytoplasm. The chain is Potassium-transporting ATPase ATP-binding subunit from Staphylococcus aureus (strain Newman).